Reading from the N-terminus, the 142-residue chain is Large ribosomal subunit protein uL11 (142 aa).

The protein belongs to the universal ribosomal protein uL11 family. As to quaternary structure, part of the ribosomal stalk of the 50S ribosomal subunit. Interacts with L10 and the large rRNA to form the base of the stalk. L10 forms an elongated spine to which L12 dimers bind in a sequential fashion forming a multimeric L10(L12)X complex. One or more lysine residues are methylated.

Functionally, forms part of the ribosomal stalk which helps the ribosome interact with GTP-bound translation factors. This is Large ribosomal subunit protein uL11 from Mannheimia succiniciproducens (strain KCTC 0769BP / MBEL55E).